Here is a 458-residue protein sequence, read N- to C-terminus: DNA repair protein RadA (458 aa).

The C4-type zinc finger occupies cysteine 11–cysteine 28. Residue glycine 100 to serine 107 coordinates ATP. The RadA KNRFG motif signature appears at lysine 256–glycine 260. The tract at residues aspartate 355 to leucine 458 is lon-protease-like.

Belongs to the RecA family. RadA subfamily.

Functionally, DNA-dependent ATPase involved in processing of recombination intermediates, plays a role in repairing DNA breaks. Stimulates the branch migration of RecA-mediated strand transfer reactions, allowing the 3' invading strand to extend heteroduplex DNA faster. Binds ssDNA in the presence of ADP but not other nucleotides, has ATPase activity that is stimulated by ssDNA and various branched DNA structures, but inhibited by SSB. Does not have RecA's homology-searching function. The protein is DNA repair protein RadA of Haemophilus influenzae (strain ATCC 51907 / DSM 11121 / KW20 / Rd).